A 353-amino-acid chain; its full sequence is Quinolinate synthase (353 aa).

His-47 and Ser-68 together coordinate iminosuccinate. Cys-113 serves as a coordination point for [4Fe-4S] cluster. Residues 139–141 (YAN) and Ser-156 contribute to the iminosuccinate site. Position 200 (Cys-200) interacts with [4Fe-4S] cluster. Iminosuccinate-binding positions include 226–228 (HPE) and Thr-243. Cys-297 serves as a coordination point for [4Fe-4S] cluster.

The protein belongs to the quinolinate synthase family. Type 1 subfamily. Requires [4Fe-4S] cluster as cofactor.

The protein localises to the cytoplasm. It carries out the reaction iminosuccinate + dihydroxyacetone phosphate = quinolinate + phosphate + 2 H2O + H(+). The protein operates within cofactor biosynthesis; NAD(+) biosynthesis; quinolinate from iminoaspartate: step 1/1. Catalyzes the condensation of iminoaspartate with dihydroxyacetone phosphate to form quinolinate. The chain is Quinolinate synthase from Serratia proteamaculans (strain 568).